An 874-amino-acid chain; its full sequence is Oxysterol-binding protein-related protein 5 (874 aa).

A disordered region spans residues 1–71 (MKEEAFLRRR…PQTPGSATKV (71 aa)). Position 12 is a phosphoserine (S12). Positions 93–123 (VSKKDALKAQKENYRQEKKRATKQLFSALTD) form a coiled coil. The PH domain occupies 126–243 (VVIMADSLKI…WLDALELALR (118 aa)). 2 disordered regions span residues 255 to 277 (QGRDGEQGSSPDASPSSLYGLPT) and 299 to 338 (FSDKSERENAEDSDAETQDHSRKTNESGSDLLDSPGGPWR). Over residues 261–277 (QGSSPDASPSSLYGLPT) the composition is skewed to polar residues. The span at 299 to 308 (FSDKSERENA) shows a compositional bias: basic and acidic residues. Residues 383–388 (LSRVVL), 445–448 (KPYN), and 477–478 (HH) contribute to the a 1,2-diacyl-sn-glycero-3-phospho-(1D-myo-inositol 4-phosphate) site. Residues 383–388 (LSRVVL) and N448 each bind a 1,2-diacyl-sn-glycero-3-phospho-L-serine. Residue S503 coordinates a 1,2-diacyl-sn-glycero-3-phospho-L-serine. Basic and acidic residues predominate over residues 660–684 (GDQHKATQEKSVLEEAQRQRAREHQ). Disordered regions lie at residues 660-685 (GDQHKATQEKSVLEEAQRQRAREHQQ) and 739-798 (GQTT…GGES). A 1,2-diacyl-sn-glycero-3-phospho-(1D-myo-inositol 4-phosphate)-binding residues include K669, E673, and R677. 2 positions are modified to phosphoserine: S746 and S749. Over residues 754 to 764 (PSSDRRLRKAS) the composition is skewed to basic and acidic residues. Positions 765 to 782 (DQPSGHSQVTESSGSTPE) are enriched in polar residues. The chain crosses the membrane as a helical span at residues 855 to 873 (SWFLLCIFLTCQLFINYIL).

It belongs to the OSBP family.

The protein localises to the endoplasmic reticulum membrane. Functionally, lipid transporter involved in lipid countertransport between the endoplasmic reticulum and the plasma membrane: specifically exchanges phosphatidylserine with phosphatidylinositol 4-phosphate (PI4P), delivering phosphatidylserine to the plasma membrane in exchange for PI4P, which is degraded by the SAC1/SACM1L phosphatase in the endoplasmic reticulum. Binds phosphatidylserine and PI4P in a mutually exclusive manner. May cooperate with NPC1 to mediate the exit of cholesterol from endosomes/lysosomes. Binds 25-hydroxycholesterol and cholesterol. In Mus musculus (Mouse), this protein is Oxysterol-binding protein-related protein 5 (Osbpl5).